Reading from the N-terminus, the 427-residue chain is Trigger factor (427 aa).

Positions 163 to 248 constitute a PPIase FKBP-type domain; that stretch reads GDIVVIDFAG…LKEIKRKELA (86 aa).

It belongs to the FKBP-type PPIase family. Tig subfamily.

The protein resides in the cytoplasm. The enzyme catalyses [protein]-peptidylproline (omega=180) = [protein]-peptidylproline (omega=0). In terms of biological role, involved in protein export. Acts as a chaperone by maintaining the newly synthesized protein in an open conformation. Functions as a peptidyl-prolyl cis-trans isomerase. This chain is Trigger factor, found in Carboxydothermus hydrogenoformans (strain ATCC BAA-161 / DSM 6008 / Z-2901).